The sequence spans 131 residues: Probable calcium-binding protein CML34 (131 aa).

EF-hand domains follow at residues 1–33 (MSAK…FSPY), 34–69 (FTQE…MLKE), 70–97 (VFVF…LGKK), and 98–131 (FTEE…IGDI). Residues D11, N13, D15, K17, E22, D47, D49, N51, E53, and E58 each coordinate Ca(2+). The Ca(2+) site is built by D111, D113, D115, Y117, and E122.

Functionally, potential calcium sensor. In Arabidopsis thaliana (Mouse-ear cress), this protein is Probable calcium-binding protein CML34 (CML34).